A 344-amino-acid chain; its full sequence is Holliday junction branch migration complex subunit RuvB (344 aa).

The tract at residues 1-180 (MSRIVSGEAQ…FGIPVRLEFY (180 aa)) is large ATPase domain (RuvB-L). ATP contacts are provided by Leu-19, Arg-20, Gly-61, Lys-64, Thr-65, Thr-66, Arg-170, Tyr-180, and Arg-217. Residue Thr-65 participates in Mg(2+) binding. The tract at residues 181–251 (THDELARVLL…AAAAALARLD (71 aa)) is small ATPAse domain (RuvB-S). Residues 254 to 344 (EVGLDALDRR…AAPPADLFDK (91 aa)) are head domain (RuvB-H). DNA is bound by residues Arg-290, Arg-309, and Arg-314.

The protein belongs to the RuvB family. As to quaternary structure, homohexamer. Forms an RuvA(8)-RuvB(12)-Holliday junction (HJ) complex. HJ DNA is sandwiched between 2 RuvA tetramers; dsDNA enters through RuvA and exits via RuvB. An RuvB hexamer assembles on each DNA strand where it exits the tetramer. Each RuvB hexamer is contacted by two RuvA subunits (via domain III) on 2 adjacent RuvB subunits; this complex drives branch migration. In the full resolvosome a probable DNA-RuvA(4)-RuvB(12)-RuvC(2) complex forms which resolves the HJ.

The protein localises to the cytoplasm. The catalysed reaction is ATP + H2O = ADP + phosphate + H(+). Functionally, the RuvA-RuvB-RuvC complex processes Holliday junction (HJ) DNA during genetic recombination and DNA repair, while the RuvA-RuvB complex plays an important role in the rescue of blocked DNA replication forks via replication fork reversal (RFR). RuvA specifically binds to HJ cruciform DNA, conferring on it an open structure. The RuvB hexamer acts as an ATP-dependent pump, pulling dsDNA into and through the RuvAB complex. RuvB forms 2 homohexamers on either side of HJ DNA bound by 1 or 2 RuvA tetramers; 4 subunits per hexamer contact DNA at a time. Coordinated motions by a converter formed by DNA-disengaged RuvB subunits stimulates ATP hydrolysis and nucleotide exchange. Immobilization of the converter enables RuvB to convert the ATP-contained energy into a lever motion, pulling 2 nucleotides of DNA out of the RuvA tetramer per ATP hydrolyzed, thus driving DNA branch migration. The RuvB motors rotate together with the DNA substrate, which together with the progressing nucleotide cycle form the mechanistic basis for DNA recombination by continuous HJ branch migration. Branch migration allows RuvC to scan DNA until it finds its consensus sequence, where it cleaves and resolves cruciform DNA. The sequence is that of Holliday junction branch migration complex subunit RuvB from Phenylobacterium zucineum (strain HLK1).